An 804-amino-acid polypeptide reads, in one-letter code: Protein translocase subunit SecA (804 aa).

Residues Gln100, 118 to 122 (GEGKT), and Asp508 contribute to the ATP site.

The protein belongs to the SecA family. As to quaternary structure, monomer and homodimer. Part of the essential Sec protein translocation apparatus which comprises SecA, SecYEG and auxiliary proteins SecDF. Other proteins may also be involved.

It localises to the cell membrane. It is found in the cytoplasm. It catalyses the reaction ATP + H2O + cellular proteinSide 1 = ADP + phosphate + cellular proteinSide 2.. Its function is as follows. Part of the Sec protein translocase complex. Interacts with the SecYEG preprotein conducting channel. Has a central role in coupling the hydrolysis of ATP to the transfer of proteins into and across the cell membrane, serving as an ATP-driven molecular motor driving the stepwise translocation of polypeptide chains across the membrane. The chain is Protein translocase subunit SecA from Leuconostoc citreum (strain KM20).